The sequence spans 76 residues: Exodeoxyribonuclease 7 small subunit (76 aa).

The protein belongs to the XseB family. As to quaternary structure, heterooligomer composed of large and small subunits.

Its subcellular location is the cytoplasm. The enzyme catalyses Exonucleolytic cleavage in either 5'- to 3'- or 3'- to 5'-direction to yield nucleoside 5'-phosphates.. Functionally, bidirectionally degrades single-stranded DNA into large acid-insoluble oligonucleotides, which are then degraded further into small acid-soluble oligonucleotides. This is Exodeoxyribonuclease 7 small subunit from Bacillus cytotoxicus (strain DSM 22905 / CIP 110041 / 391-98 / NVH 391-98).